Consider the following 126-residue polypeptide: Ribosome-binding factor A (126 aa).

This sequence belongs to the RbfA family. Monomer. Binds 30S ribosomal subunits, but not 50S ribosomal subunits or 70S ribosomes.

The protein resides in the cytoplasm. One of several proteins that assist in the late maturation steps of the functional core of the 30S ribosomal subunit. Associates with free 30S ribosomal subunits (but not with 30S subunits that are part of 70S ribosomes or polysomes). Required for efficient processing of 16S rRNA. May interact with the 5'-terminal helix region of 16S rRNA. This is Ribosome-binding factor A from Azoarcus sp. (strain BH72).